The primary structure comprises 154 residues: Interleukin-7 (154 aa).

The signal sequence occupies residues 1 to 25; the sequence is MFHVSFRYIFGIPPLILVLLPVTSS. 3 cysteine pairs are disulfide-bonded: Cys27–Cys145, Cys58–Cys133, and Cys71–Cys116. N-linked (GlcNAc...) asparagine glycans are attached at residues Asn94 and Asn115.

Belongs to the IL-7/IL-9 family. As to quaternary structure, interacts with IL7R and CSF2RG. Three disulfide bonds are present.

It localises to the secreted. Its function is as follows. Hematopoietic cytokine that plays an essential role in the development, expansion, and survival of naive and memory T-cells and B-cells thereby regulating the number of mature lymphocytes and maintaining lymphoid homeostasis. Mechanistically, exerts its biological effects through a receptor composed of IL7RA subunit and the cytokine receptor common subunit gamma/CSF2RG. Binding to the receptor leads to activation of various kinases including JAK1 or JAK3 depending on the cell type and subsequently propagation of signals through activation of several downstream signaling pathways including the PI3K/Akt/mTOR or the JAK-STAT5. The sequence is that of Interleukin-7 (Il7) from Rattus norvegicus (Rat).